The primary structure comprises 250 residues: tRNA (guanine-N(1)-)-methyltransferase (250 aa).

S-adenosyl-L-methionine-binding positions include Gly-116 and 136–141; that span reads IGDYVL.

It belongs to the RNA methyltransferase TrmD family. As to quaternary structure, homodimer.

The protein resides in the cytoplasm. It catalyses the reaction guanosine(37) in tRNA + S-adenosyl-L-methionine = N(1)-methylguanosine(37) in tRNA + S-adenosyl-L-homocysteine + H(+). Its function is as follows. Specifically methylates guanosine-37 in various tRNAs. In Pseudomonas fluorescens (strain SBW25), this protein is tRNA (guanine-N(1)-)-methyltransferase.